Consider the following 160-residue polypeptide: Cyclic pyranopterin monophosphate synthase (160 aa).

Substrate-binding positions include 77-79 (LCH) and 114-115 (ME). Asp129 is a catalytic residue.

Belongs to the MoaC family. In terms of assembly, homohexamer; trimer of dimers.

It catalyses the reaction (8S)-3',8-cyclo-7,8-dihydroguanosine 5'-triphosphate = cyclic pyranopterin phosphate + diphosphate. The protein operates within cofactor biosynthesis; molybdopterin biosynthesis. Functionally, catalyzes the conversion of (8S)-3',8-cyclo-7,8-dihydroguanosine 5'-triphosphate to cyclic pyranopterin monophosphate (cPMP). This is Cyclic pyranopterin monophosphate synthase from Alcanivorax borkumensis (strain ATCC 700651 / DSM 11573 / NCIMB 13689 / SK2).